Here is a 495-residue protein sequence, read N- to C-terminus: Neuronal acetylcholine receptor subunit beta-4 (495 aa).

The N-terminal stretch at 1–20 is a signal peptide; sequence MRGTPLLLVSLFSLLQDGDC. At 21 to 235 the chain is on the extracellular side; that stretch reads RLANAEEKLM…IIKRKPLFYT (215 aa). N-linked (GlcNAc...) asparagine glycans are attached at residues N35, N92, N137, and N165. C152 and C166 form a disulfide bridge. Residues 236–256 form a helical membrane-spanning segment; the sequence is INLIIPCVLITSLAILVFYLP. At 257–264 the chain is on the cytoplasmic side; the sequence is SDCGEKMT. Residue E261 participates in Na(+) binding. Residues 265 to 285 form a helical membrane-spanning segment; that stretch reads LCISVLLALTFFLLLISKIVP. Residues 286–297 lie on the Extracellular side of the membrane; sequence PTSLDIPLIGKY. A helical membrane pass occupies residues 298-318; sequence LLFTMVLVTFSIVTTVCVLNV. Residues 319 to 463 lie on the Cytoplasmic side of the membrane; the sequence is HHRSPSTHTM…WKFVAMVVDR (145 aa). Residues 464-484 traverse the membrane as a helical segment; that stretch reads LFLWVFVFVCILGTMGLFLPP. Residues 485-495 lie on the Extracellular side of the membrane; the sequence is LFQIHAPSKDS.

The protein belongs to the ligand-gated ion channel (TC 1.A.9) family. Acetylcholine receptor (TC 1.A.9.1) subfamily. Beta-4/CHRNB4 sub-subfamily. As to quaternary structure, neuronal AChR is composed of two different types of subunits: alpha and beta. CHRNB4/Beta-4 subunit can be combined to CHRNA2/alpha-2, CHRNA3/alpha-3 or CHRNA4/alpha-4, CHRNA5/alpha-5 and CHRNB3/beta-3 to give rise to functional receptors. Forms stoichiometries such as (CHRNA3)2:(CHRNB4)3 or (CHRNA3:CHRNB4)2:CHRNB3. Interacts with RIC3; which is required for proper folding and assembly. Interacts with LYPD6. In terms of tissue distribution, in the brain, it is detected in the medial habenula. In the peripheral nervous system, it is found at least in the adrenal gland.

The protein resides in the synaptic cell membrane. The protein localises to the cell membrane. The enzyme catalyses Ca(2+)(in) = Ca(2+)(out). The catalysed reaction is K(+)(in) = K(+)(out). It carries out the reaction Na(+)(in) = Na(+)(out). Activated by a myriad of ligands such as acetylcholine, cytisine, nicotine, choline and epibatidine. nAChR activity is inhibited by the antagonist alpha-conotoxins BuIA and MII, small disulfide-constrained peptides from cone snails. The heteropentamer CHRNA3:CHRNB4 activity is blocked by the alpha-conotoxin ImI and AuIB. In terms of biological role, component of neuronal acetylcholine receptors (nAChRs) that function as pentameric, ligand-gated cation channels with high calcium permeability among other activities. nAChRs are excitatory neurotrasnmitter receptors formed by a collection of nAChR subunits known to mediate synaptic transmission in the nervous system and the neuromuscular junction. Each nAchR subunit confers differential attributes to channel properties, including activation, deactivation and desensitization kinetics, pH sensitivity, cation permeability, and binding to allosteric modulators. CHRNB4 forms heteropentameric neuronal acetylcholine receptors with CHRNA2, CHRNA3 and CHRNA4, as well as CHRNA5 and CHRNB3 as accesory subunits. CHRNA3:CHRNB4 being predominant in neurons of the autonomic ganglia, it is known as ganglionic nicotinic receptor. CHRNA3:CHRNB4 or CHRNA3:CHRNA5:CHRNB4 play also an important role in the habenulo-interpeduncular tract, modulating the mesolimbic dopamine system and affecting reward circuits and addiction. Hypothalamic CHRNA3:CHRNB4 nAChR activation by nicotine leads to activation of POMC neurons and a decrease in food intake. The protein is Neuronal acetylcholine receptor subunit beta-4 (Chrnb4) of Rattus norvegicus (Rat).